Here is a 279-residue protein sequence, read N- to C-terminus: Cholesterol 25-hydroxylase-like protein 2 (279 aa).

N-linked (GlcNAc...) asparagine glycans are attached at residues asparagine 6 and asparagine 13. The next 3 membrane-spanning stretches occupy residues 36-56, 86-106, and 120-140; these read LFPVILSVSMYLVLVFFYTVL, LALTTYNHLLYIFPAAVAQWL, and LTAFLLGIVGCTVVFDFQYYL. The Fatty acid hydroxylase domain maps to 128–262; sequence VGCTVVFDFQ…FAHWDWLGGT (135 aa). The short motif at 141–145 is the Histidine box-1 element; that stretch reads WHLLH. The short motif at 156-160 is the Histidine box-2 element; sequence HALHH. The next 2 membrane-spanning stretches occupy residues 165–185 and 189–209; these read TFSLVTQYLSAWELFSVGFWT and PLLLQCHCLTAWAFMLFNIWV. The Histidine box-3 signature appears at 237-243; sequence RHDAHHQ.

Belongs to the sterol desaturase family. Fe cation serves as cofactor.

The protein resides in the endoplasmic reticulum membrane. Its function is as follows. May catalyze the formation of 25-hydroxycholesterol from cholesterol. The sequence is that of Cholesterol 25-hydroxylase-like protein 2 from Danio rerio (Zebrafish).